The following is a 759-amino-acid chain: 5-methyltetrahydropteroyltriglutamate--homocysteine methyltransferase (759 aa).

Residues 1–16 (MTQPVRRQPFTATITG) are compositionally biased toward polar residues. Residues 1 to 22 (MTQPVRRQPFTATITGSPRIGP) form a disordered region. 5-methyltetrahydropteroyltri-L-glutamate-binding positions include 24-27 (RELK) and Lys-118. L-homocysteine-binding positions include 437–439 (IGS) and Glu-490. L-methionine contacts are provided by residues 437 to 439 (IGS) and Glu-490. 5-methyltetrahydropteroyltri-L-glutamate is bound by residues 521 to 522 (RC) and Trp-567. Position 605 (Asp-605) interacts with L-homocysteine. Residue Asp-605 coordinates L-methionine. Glu-611 contacts 5-methyltetrahydropteroyltri-L-glutamate. Zn(2+) is bound by residues His-647, Cys-649, and Glu-671. Catalysis depends on His-700, which acts as the Proton donor. Cys-732 contributes to the Zn(2+) binding site.

The protein belongs to the vitamin-B12 independent methionine synthase family. The cofactor is Zn(2+).

It catalyses the reaction 5-methyltetrahydropteroyltri-L-glutamate + L-homocysteine = tetrahydropteroyltri-L-glutamate + L-methionine. The protein operates within amino-acid biosynthesis; L-methionine biosynthesis via de novo pathway; L-methionine from L-homocysteine (MetE route): step 1/1. Its function is as follows. Catalyzes the transfer of a methyl group from 5-methyltetrahydrofolate to homocysteine resulting in methionine formation. This chain is 5-methyltetrahydropteroyltriglutamate--homocysteine methyltransferase, found in Mycobacterium tuberculosis (strain ATCC 25177 / H37Ra).